The chain runs to 85 residues: uncharacterized protein (85 aa).

This is an uncharacterized protein from Shigella flexneri.